Consider the following 394-residue polypeptide: MTPQVLTILGSTGSIGESTLDVVSRHPEKFRVFALAGHKQVEKLAAQCQTFRPEYAVVADAEHAARLEALLKRDGTATQVLHGAQALVDVASADEVSGVMCAIVGAAGLPSALAAAQKGKTIYLANKETLVVSGALFMETARANGAAVLPVDSEHNAIFQVLPRDYTDRLNEHGIDSIILTASGGPFLTTDLSTFDSITPEQAVKHPNWRMGRKISVDSATMANKGLELIEAHWLFNCPPDKLEVVIHPQSVIHSMVRYRDGSVLAQLGNPDMRTPIAYCLGLPERIDSGVGKLDFGALSALTFQKPDFGRFPCLKFAYETINAGGAAPCVLNAANETAVAAFLDGQIKFTDIAKTVAHCLAQDFSNGMGDIEGLLAQDARTRAQARAFIGTLR.

NADPH contacts are provided by threonine 12, glycine 13, serine 14, isoleucine 15, lysine 39, glutamine 40, and asparagine 126. Lysine 127 serves as a coordination point for 1-deoxy-D-xylulose 5-phosphate. Glutamate 128 provides a ligand contact to NADPH. Aspartate 152 contacts Mn(2+). 1-deoxy-D-xylulose 5-phosphate contacts are provided by serine 153, glutamate 154, serine 183, and histidine 206. Glutamate 154 lines the Mn(2+) pocket. Glycine 212 is an NADPH binding site. Serine 219, asparagine 224, lysine 225, and glutamate 228 together coordinate 1-deoxy-D-xylulose 5-phosphate. Glutamate 228 provides a ligand contact to Mn(2+).

The protein belongs to the DXR family. It depends on Mg(2+) as a cofactor. Mn(2+) serves as cofactor.

It carries out the reaction 2-C-methyl-D-erythritol 4-phosphate + NADP(+) = 1-deoxy-D-xylulose 5-phosphate + NADPH + H(+). The protein operates within isoprenoid biosynthesis; isopentenyl diphosphate biosynthesis via DXP pathway; isopentenyl diphosphate from 1-deoxy-D-xylulose 5-phosphate: step 1/6. Functionally, catalyzes the NADPH-dependent rearrangement and reduction of 1-deoxy-D-xylulose-5-phosphate (DXP) to 2-C-methyl-D-erythritol 4-phosphate (MEP). The chain is 1-deoxy-D-xylulose 5-phosphate reductoisomerase from Neisseria gonorrhoeae (strain ATCC 700825 / FA 1090).